The following is a 284-amino-acid chain: MYVVSTKQMLNNAQRGGYAVPAFNIHNLETMQVVVETAANLHAPVIIAGTPGTFTHAGTENLLALVSAMAKQYHHPLAIHLDHHTKFDDIAQNLRSGVRSVMIDASHLPFAQNISRVKEVVDFCHRFDVSVEAELGQLGGQEDDVQVNEADAFYTNPAQAREFAEATGIDSLAVAIGTAHGMYASAPVLDFSRLENIRQWVNLPLVLHGASGLSTKDIQQTIKLGICKINVATELKNAFSQALKNYLTAHPEATDPRDYLQSAKSAMRDVVSKVIADCGCEGRA.

Asp82 functions as the Proton donor in the catalytic mechanism. The Zn(2+) site is built by His83 and His180. Dihydroxyacetone phosphate is bound at residue Gly181. His208 is a Zn(2+) binding site. Residues 209-211 (GAS) and 230-233 (NVAT) contribute to the dihydroxyacetone phosphate site.

Belongs to the class II fructose-bisphosphate aldolase family. TagBP aldolase GatY subfamily. In terms of assembly, forms a complex with GatZ. It depends on Zn(2+) as a cofactor.

It catalyses the reaction D-tagatofuranose 1,6-bisphosphate = D-glyceraldehyde 3-phosphate + dihydroxyacetone phosphate. Its pathway is carbohydrate metabolism; D-tagatose 6-phosphate degradation; D-glyceraldehyde 3-phosphate and glycerone phosphate from D-tagatose 6-phosphate: step 2/2. Functionally, catalytic subunit of the tagatose-1,6-bisphosphate aldolase GatYZ, which catalyzes the reversible aldol condensation of dihydroxyacetone phosphate (DHAP or glycerone-phosphate) with glyceraldehyde 3-phosphate (G3P) to produce tagatose 1,6-bisphosphate (TBP). Requires GatZ subunit for full activity and stability. Is involved in the catabolism of galactitol. The protein is D-tagatose-1,6-bisphosphate aldolase subunit GatY (gatY) of Escherichia coli.